The sequence spans 344 residues: Protein pelota homolog (344 aa).

Belongs to the eukaryotic release factor 1 family. Pelota subfamily. As to quaternary structure, monomer. A divalent metal cation serves as cofactor.

It is found in the cytoplasm. May function in recognizing stalled ribosomes, interact with stem-loop structures in stalled mRNA molecules, and effect endonucleolytic cleavage of the mRNA. May play a role in the release non-functional ribosomes and degradation of damaged mRNAs. Has endoribonuclease activity. The chain is Protein pelota homolog from Saccharolobus islandicus (strain M.14.25 / Kamchatka #1) (Sulfolobus islandicus).